A 354-amino-acid polypeptide reads, in one-letter code: Peroxisomal membrane protein PEX32 (354 aa).

A run of 5 helical transmembrane segments spans residues 24–44 (LLNMPPVITTALYTAFPVIFL), 63–83 (FIAIAIYIMVVKYWTVVACTV), 84–104 (LPTIIALGTCASLWFLKTTID), 151–171 (GFSLIAITPCYIWLMTRIFTV), and 173–193 (SFLLVFGVAWLSFHSSWSVAT). A glycan (N-linked (GlcNAc...) asparagine) is linked at Asn319.

The protein belongs to the PEX28-32 family. PEX30/31 subfamily.

The protein localises to the peroxisome membrane. The protein resides in the endoplasmic reticulum membrane. Functionally, with PEX24, contributes to tethering of peroxisomes to the endoplasmic reticulum for organelle biogenesis, positioning and segregation. This chain is Peroxisomal membrane protein PEX32, found in Ogataea parapolymorpha (strain ATCC 26012 / BCRC 20466 / JCM 22074 / NRRL Y-7560 / DL-1) (Yeast).